The chain runs to 370 residues: Leucine-rich repeat and transmembrane domain-containing protein 2 (370 aa).

Positions 1–35 (MLAPGSSPGQRGRLALQWRQVSWITCWIALYAVEA) are cleaved as a signal peptide. In terms of domain architecture, LRRNT spans 36 to 68 (LPTCPFSCKCDSRSLEVDCSGLGLTTVPPDVPA). The Extracellular segment spans residues 36 to 310 (LPTCPFSCKC…PASVRRAMGT (275 aa)). LRR repeat units follow at residues 69-90 (ATRTLLLLNNKLSALPSWAFAN), 93-114 (SLQRLDLSNNFLDRLPRSIFGD), 117-139 (NLTELQLRNNSIRTLDRDLLRHS), 141-162 (LLRHLDLSINGLAQLPPGLFDG), and 165-186 (ALRSLSLRSNRLQNLDRLTFEP). The N-linked (GlcNAc...) asparagine glycan is linked to Asn90. Residues Asn117 and Asn125 are each glycosylated (N-linked (GlcNAc...) asparagine). In terms of domain architecture, LRRCT spans 198–252 (NPWECDCNLREFKHWMEWFSYRGGRLDQLACTLPKELRGKDMRMVPMEMFNYCSQ). A glycan (N-linked (GlcNAc...) asparagine) is linked at Asn257. Residues 261 to 300 (GLDIPGPPCTKASPEPAKPKPGAEPEPEPSTACPQKQRHR) are disordered. The chain crosses the membrane as a helical span at residues 311–331 (VIIAGVVCGVVCIMMVVAAAY). Over 332 to 370 (GCIYASLMAKYHRELKKRQPLMGDPEGEHEDQKQISSVA) the chain is Cytoplasmic. The disordered stretch occupies residues 351-370 (PLMGDPEGEHEDQKQISSVA).

The protein resides in the membrane. This chain is Leucine-rich repeat and transmembrane domain-containing protein 2 (LRTM2), found in Homo sapiens (Human).